A 272-amino-acid chain; its full sequence is NH(3)-dependent NAD(+) synthetase (272 aa).

Glycine 45–serine 52 contributes to the ATP binding site. Aspartate 51 lines the Mg(2+) pocket. Deamido-NAD(+) is bound at residue arginine 138. ATP is bound at residue threonine 158. Glutamate 163 lines the Mg(2+) pocket. The deamido-NAD(+) site is built by lysine 171 and aspartate 178. Positions 187 and 209 each coordinate ATP. Position 258–259 (histidine 258–lysine 259) interacts with deamido-NAD(+).

The protein belongs to the NAD synthetase family. In terms of assembly, homodimer.

It carries out the reaction deamido-NAD(+) + NH4(+) + ATP = AMP + diphosphate + NAD(+) + H(+). It participates in cofactor biosynthesis; NAD(+) biosynthesis; NAD(+) from deamido-NAD(+) (ammonia route): step 1/1. In terms of biological role, catalyzes the ATP-dependent amidation of deamido-NAD to form NAD. Uses ammonia as a nitrogen source. The polypeptide is NH(3)-dependent NAD(+) synthetase (Bacillus cereus (strain Q1)).